The following is a 412-amino-acid chain: MDRRKLIFGKFWLFGLLNNVLYVVILAAAVDIVGPTLPKSLILLADILPSFLVKLVAPFFIDRVEYHYRIWSLIALSGFGMLLVASGRLGVCIVGIVLASISSGVGEITFLQLTHYFSHVALNGWSSGTGGAGLAGSFLYMLLTSILKIPVSRSLLLFSILPIGFLLYFTLQVERTAYEPLASGHFMEAEDNSGSVISLEAPRTTVDNARDCASRPRLAALRERIEVTMRRLKVLVVPYMIPLSTVYLFEYLINQGVSPTLMFPIHEGYGTSQLFHKYRDIYVAYGTLYQLGVFISRSSGSWVRIRGLYLLSVLQFLNLVILLIQSWYYVIHSVWVIMAIVLYEGLLGGASYVNSFLNISEDVPLAEREFSLGAVSISDSSGTLVAAFIGILLEPVLCSHQVKTGRPWCQLE.

Residues 1-29 form the signal peptide; the sequence is MDRRKLIFGKFWLFGLLNNVLYVVILAAA. 9 helical membrane passes run 41–61, 70–90, 91–111, 131–151, 154–174, 234–254, 281–300, 307–329, and 334–356; these read LILL…PFFI, IWSL…GRLG, VCIV…ITFL, GAGL…KIPV, SLLL…LQVE, VLVV…YLIN, IYVA…RSSG, GLYL…SWYY, and VWVI…VNSF.

The protein belongs to the battenin family.

The protein localises to the vacuole membrane. In terms of biological role, involved in vacuolar transport and vacuole pH homeostasis. Also required for cytokinesis. The polypeptide is Protein BTN1 (BTN1) (Eremothecium gossypii (strain ATCC 10895 / CBS 109.51 / FGSC 9923 / NRRL Y-1056) (Yeast)).